The following is a 343-amino-acid chain: Anthranilate phosphoribosyltransferase (343 aa).

5-phospho-alpha-D-ribose 1-diphosphate contacts are provided by residues Gly-84, 87–88 (GD), Thr-92, 94–97 (NIST), 112–120 (KHGNRGVSS), and Ser-124. Gly-84 contributes to the anthranilate binding site. Position 96 (Ser-96) interacts with Mg(2+). Asn-115 serves as a coordination point for anthranilate. Arg-170 is an anthranilate binding site. Mg(2+)-binding residues include Asp-229 and Glu-230.

Belongs to the anthranilate phosphoribosyltransferase family. As to quaternary structure, homodimer. Requires Mg(2+) as cofactor.

The enzyme catalyses N-(5-phospho-beta-D-ribosyl)anthranilate + diphosphate = 5-phospho-alpha-D-ribose 1-diphosphate + anthranilate. It participates in amino-acid biosynthesis; L-tryptophan biosynthesis; L-tryptophan from chorismate: step 2/5. Its function is as follows. Catalyzes the transfer of the phosphoribosyl group of 5-phosphorylribose-1-pyrophosphate (PRPP) to anthranilate to yield N-(5'-phosphoribosyl)-anthranilate (PRA). The protein is Anthranilate phosphoribosyltransferase of Burkholderia cenocepacia (strain ATCC BAA-245 / DSM 16553 / LMG 16656 / NCTC 13227 / J2315 / CF5610) (Burkholderia cepacia (strain J2315)).